Reading from the N-terminus, the 444-residue chain is 3-phosphoshikimate 1-carboxyvinyltransferase (444 aa).

Positions 29, 30, and 34 each coordinate 3-phosphoshikimate. A phosphoenolpyruvate-binding site is contributed by Lys-29. Residues Gly-102 and Arg-131 each contribute to the phosphoenolpyruvate site. 3-phosphoshikimate-binding residues include Ser-176, Gln-178, Asp-326, and Lys-353. Gln-178 is a phosphoenolpyruvate binding site. Residue Asp-326 is the Proton acceptor of the active site. Residues Arg-357 and Arg-399 each contribute to the phosphoenolpyruvate site.

The protein belongs to the EPSP synthase family. Monomer.

The protein resides in the cytoplasm. It catalyses the reaction 3-phosphoshikimate + phosphoenolpyruvate = 5-O-(1-carboxyvinyl)-3-phosphoshikimate + phosphate. The protein operates within metabolic intermediate biosynthesis; chorismate biosynthesis; chorismate from D-erythrose 4-phosphate and phosphoenolpyruvate: step 6/7. Its function is as follows. Catalyzes the transfer of the enolpyruvyl moiety of phosphoenolpyruvate (PEP) to the 5-hydroxyl of shikimate-3-phosphate (S3P) to produce enolpyruvyl shikimate-3-phosphate and inorganic phosphate. The chain is 3-phosphoshikimate 1-carboxyvinyltransferase from Synechococcus sp. (strain JA-3-3Ab) (Cyanobacteria bacterium Yellowstone A-Prime).